Consider the following 149-residue polypeptide: MKSTLRISLKAGERIFINGAVLRVDRKVALEFLNDVTFLLENHVLQPEGATTPLRQLYFIAQMILINPEGKDHSTAMFRKSITMLLTCFKNEEILAELKRIDALVSTGRAFDALKAIRGLYAIEDNILNNQELPPTMVEQIRREIAPWR.

This sequence belongs to the FlbT family.

Its function is as follows. Has a post-transcriptional repressor function in flagellum biogenesis. Associates with the 5'-UTR of fljK mRNA and promotes its degradation. This is Probable flagellum biosynthesis repressor protein FlbT from Rhizobium etli (strain ATCC 51251 / DSM 11541 / JCM 21823 / NBRC 15573 / CFN 42).